A 412-amino-acid chain; its full sequence is MKDMGRKARRAATVLAVMSSEQKNKALEMIALSLEAHSDEILRANHQDLLNATQNNLTVAMVDRLKLNEVRLCTIIDSVRQVACLPDPVGQVMDEWTRPNGLHISRVRTPLGVIGIIYESRPNVTIDASTLCLKAGNAAILRGGSDSFHSAHALHCALVKGLKKAGFPKDAIQMVATKDRGAVGEMLKGLDGAIDVIVPRGGKNLVARIQVDARVPIFAHLEGLCHIYIDQSADLDMARNIVLNAKLRRTGICSAVETVLIDRQALEKFLPILTALQKKGCEIRATEDIVFLMPDAKLAFEEDWSHEYLDAIVSVKTVESVEGAIAHIKRYSSGHTESIIAEDMEIVEKFFNHLDSAILLHNASTQFADGGEFGFGAEIGIATGKMHARGPIGVEQLTSFQYHIKGNGQVRP.

It belongs to the gamma-glutamyl phosphate reductase family.

Its subcellular location is the cytoplasm. The catalysed reaction is L-glutamate 5-semialdehyde + phosphate + NADP(+) = L-glutamyl 5-phosphate + NADPH + H(+). The protein operates within amino-acid biosynthesis; L-proline biosynthesis; L-glutamate 5-semialdehyde from L-glutamate: step 2/2. In terms of biological role, catalyzes the NADPH-dependent reduction of L-glutamate 5-phosphate into L-glutamate 5-semialdehyde and phosphate. The product spontaneously undergoes cyclization to form 1-pyrroline-5-carboxylate. This Bartonella henselae (strain ATCC 49882 / DSM 28221 / CCUG 30454 / Houston 1) (Rochalimaea henselae) protein is Gamma-glutamyl phosphate reductase.